Reading from the N-terminus, the 309-residue chain is 4-diphosphocytidyl-2-C-methyl-D-erythritol kinase (309 aa).

Residue Lys-28 is part of the active site. 120 to 130 (PSQAGMGGGSS) serves as a coordination point for ATP. The active site involves Asp-162.

The protein belongs to the GHMP kinase family. IspE subfamily.

The enzyme catalyses 4-CDP-2-C-methyl-D-erythritol + ATP = 4-CDP-2-C-methyl-D-erythritol 2-phosphate + ADP + H(+). It participates in isoprenoid biosynthesis; isopentenyl diphosphate biosynthesis via DXP pathway; isopentenyl diphosphate from 1-deoxy-D-xylulose 5-phosphate: step 3/6. Catalyzes the phosphorylation of the position 2 hydroxy group of 4-diphosphocytidyl-2C-methyl-D-erythritol. The chain is 4-diphosphocytidyl-2-C-methyl-D-erythritol kinase from Polaromonas sp. (strain JS666 / ATCC BAA-500).